Consider the following 841-residue polypeptide: SLIT and NTRK-like protein 6 (841 aa).

The first 26 residues, 1–26, serve as a signal peptide directing secretion; that stretch reads MKLWIHLFYSSLLACISLHSQTPVLS. The 41-residue stretch at 27–67 folds into the LRRNT 1 domain; it reads SRGSCDSLCNCEEKDGTMLINCEAKGIKMVSEISVPPSRPF. Residues 27-608 are Extracellular-facing; the sequence is SRGSCDSLCN…RSLTDAVPLS (582 aa). LRR repeat units follow at residues 89-110, 113-134, 137-158, 161-182, and 184-205; these read NAIS…AFNG, LLKQ…TFHG, NLEF…AFSK, RLKV…IFRF, and PLTH…GFLE. An LRRCT 1 domain is found at 218–269; the sequence is NKWACNCDLLQLKTWLENMPPQSIIGDVVCNSPPFFKGSILSRLKKESICPT. The LRRNT 2 domain occupies 320-361; sequence PSTQLPGPYCPIPCNCKVLSPSGLLIHCQERNIESLSDLRPP. LRR repeat units follow at residues 364–385, 388–409, 412–433, 436–457, 460–481, and 483–504; these read NPRK…DLVE, TLEM…SFMN, RLQK…MFLG, NLEY…TFNP, KLKV…IFSG, and PLTK…NILD. In terms of domain architecture, LRRCT 2 spans 517-568; sequence NPWDCSCDLVGLQQWIQKLSKNTVTDDILCTSPGHLDKKELKALNSEILCPG. Residues 609–629 traverse the membrane as a helical segment; the sequence is VLILGLLIMFITIVFCAAGIV. Residues 630–841 lie on the Cytoplasmic side of the membrane; sequence VLVLHRRRRY…DYLEVLEQQT (212 aa).

It belongs to the SLITRK family. As to expression, in adult brain, highly expressed in putamen with no expression in cerebral cortex. Expressed in adult and fetal lung and fetal liver. Also expressed at high levels in some brain tumors including medulloblastomas and primitive neuroectodermal tumors.

The protein localises to the cell membrane. Functionally, regulator of neurite outgrowth required for normal hearing and vision. This Homo sapiens (Human) protein is SLIT and NTRK-like protein 6 (SLITRK6).